The sequence spans 431 residues: Teosinte glume architecture 1 (431 aa).

Disordered regions lie at residues 18-55 (QDHA…GAPA) and 68-102 (ECEP…QQCP). The span at 21 to 41 (AAAAPSSGGHAANAAAAGTGT) shows a compositional bias: low complexity. The SBP-type zinc finger occupies 101–178 (CPSCAVDGCR…DGHNRRRRKP (78 aa)). Zn(2+) contacts are provided by C104, C109, C126, H129, C145, C148, H152, and C164. Residues 408–419 (GGGSGGGEGSSD) show a composition bias toward gly residues. Residues 408-431 (GGGSGGGEGSSDGGTSSSMPFSWQ) are disordered.

Monomer and homodimer. As to expression, strongly expressed in immature ears and weakly in husks. Found in the inflorescence meristem of the developing ear, in the spikelet pair primordia, the glume primordia, the cupule forming region and other floral organs. Not detected in other tissues.

SBP transcriptional regulator probably involved in the domestication of maize. Acts as a transcriptional repressor binding to a 5'-GTAC-3' motif. May repress the growth of lateral branches in length and numbers. The protein is Teosinte glume architecture 1 of Zea mays (Maize).